The chain runs to 365 residues: tRNA-specific 2-thiouridylase MnmA (365 aa).

Residues 9–16 and Met-35 each bind ATP; that span reads GLSGGVDS. Positions 95 to 97 are interaction with target base in tRNA; the sequence is NPD. Cys-100 (nucleophile) is an active-site residue. Cysteines 100 and 196 form a disulfide. Gly-124 provides a ligand contact to ATP. The interaction with tRNA stretch occupies residues 146 to 148; sequence KDQ. Cys-196 (cysteine persulfide intermediate) is an active-site residue. The tract at residues 315–316 is interaction with tRNA; it reads RY.

The protein belongs to the MnmA/TRMU family.

The protein resides in the cytoplasm. The enzyme catalyses S-sulfanyl-L-cysteinyl-[protein] + uridine(34) in tRNA + AH2 + ATP = 2-thiouridine(34) in tRNA + L-cysteinyl-[protein] + A + AMP + diphosphate + H(+). Its function is as follows. Catalyzes the 2-thiolation of uridine at the wobble position (U34) of tRNA, leading to the formation of s(2)U34. This is tRNA-specific 2-thiouridylase MnmA from Dechloromonas aromatica (strain RCB).